The following is a 58-amino-acid chain: UPF0391 membrane protein VP0082 (58 aa).

Helical transmembrane passes span Trp-4 to Ala-24 and Val-30 to Ile-50.

The protein belongs to the UPF0391 family.

It is found in the cell membrane. This Vibrio parahaemolyticus serotype O3:K6 (strain RIMD 2210633) protein is UPF0391 membrane protein VP0082.